Reading from the N-terminus, the 896-residue chain is MAGDSRNEPMFCEEGSSESGYVLCVIDSLKKKITSDRFVYIQKRVEENSIKLSPITLHSHNLSKNRQTSTSNSTDLVSNLLTKRKEDALCAVNSRESSPDESEGANCQDECSSTVIVGGNLSARNSVRPIRLPEVATLPPYTTWIFLDRNQRMQEDQSVLGRRRIYYDTNCGEALICSDSEDEAVEDEEEKKEFKDSEDCIIRMTIQECGMSDAVLETLARDIERAPDDIKARYEILQGEKPEGSSKKVSELNVKMEDVYGDKDLDAALDSFDNLFCRRCLVFDCKLHGCSQDLVFPTEKQAPLCSSDEGTPCGIHCYKLVSKPDAIMEIDSHLLVDVEEPTSDNLKDQIGSNKKKLGSSGQKTKSQQSESSSTARVSSESSESEVQLLSNKSPQHSPGLSKNKLGAKGGIKKSTNRRIAERILMSVKKGQQEMSPDSNSIVNGCHWPRDMKLRSDTRSGIKDSVVSSQCNSPSTRSFRKKGTLQMENNSSFVDAQSDSMEDTNNEHSATDGCDSSRKEECVDESICRQEAHGRSWKVIEQGLLLKGLEIFGKNSCLIARNLLGGMKTCTDVFQYMNYIENSSASGALSGVDSLVKGYMKGNELRTRSRFVRRRGRVRRLKYTWKTAGYHFIRKRITERKDQPCRQYTPCGCQSACGKQCPCLTNGTCCEKYCGCPKMCKNRFRGCHCAKSQCRSRQCPCFAADRECDPDVCRNCWVGCGDGTLGVPNQRGDNYECRNMKLLLKQQQRVLLGRSDVSGWGAFLKNSVGKHEYLGEYTGELISHKEADKRGKIYDRENSSFLFNLNNEYVLDAYRMGDKLKFANHSPDPNCYAKVIMVAGDHRVGIFAKERISAGEELFYDYRYEPDRAPAWARKPEGPGAKDDAQPSTGRAKKLAH.

Disordered regions lie at residues 344 to 419 (DNLK…NRRI) and 459 to 514 (SGIK…DGCD). Residues 358 to 390 (GSSGQKTKSQQSESSSTARVSSESSESEVQLLS) are compositionally biased toward low complexity. Polar residues-rich tracts occupy residues 391 to 400 (NKSPQHSPGL), 465 to 476 (VVSSQCNSPSTR), and 485 to 498 (QMEN…AQSD). The segment covering 504-514 (NNEHSATDGCD) has biased composition (basic and acidic residues). A CXC domain is found at 633 to 732 (RKRITERKDQ…TLGVPNQRGD (100 aa)). The 116-residue stretch at 747–862 (QRVLLGRSDV…AGEELFYDYR (116 aa)) folds into the SET domain. Residue Y861 participates in S-adenosyl-L-methionine binding. Residues 869–884 (PAWARKPEGPGAKDDA) show a composition bias toward basic and acidic residues. Positions 869–896 (PAWARKPEGPGAKDDAQPSTGRAKKLAH) are disordered.

It belongs to the class V-like SAM-binding methyltransferase superfamily. Histone-lysine methyltransferase family. EZ subfamily. Interacts with FIE1. Component of the polycomb repressive complex 2 (PRC2), composed of the core PRC2 components FIE2, EMF2B and EZ1. PRC2 methylates 'Lys-27' residues of histone H3 (H3K27me3), leading to transcriptional repression of the affected target gene. As to expression, widely expressed. Highly expressed in young panicle.

It catalyses the reaction L-lysyl(27)-[histone H3] + 3 S-adenosyl-L-methionine = N(6),N(6),N(6)-trimethyl-L-lysyl(27)-[histone H3] + 3 S-adenosyl-L-homocysteine + 3 H(+). Its function is as follows. Polycomb group (PcG) protein. Catalytic subunit of some PcG multiprotein complex, which methylates 'Lys-27' of histone H3, leading to transcriptional repression of the affected target genes. PcG proteins act by forming multiprotein complexes, which are required to maintain the transcriptionally repressive state of homeotic genes throughout development. PcG proteins are not required to initiate repression, but to maintain it during later stages of development. Involved in the regulation of flowering. Represses flowering under long day (LD) conditions. Regulates the trimethylation on histone H3 'Lys-27' (H3K27me3) of the flowering regulators MADS14, MADS15, RFT1, EHD1, HD3A and LF. This is Histone-lysine N-methyltransferase CLF from Oryza sativa subsp. japonica (Rice).